The following is a 359-amino-acid chain: Type-1 angiotensin II receptor (359 aa).

Residues 1 to 25 (MMLNSSTEDGIKRIQDDCPKAGRHN) are Extracellular-facing. Asn-4 carries N-linked (GlcNAc...) asparagine glycosylation. Positions 15 and 17 each coordinate angiotensin II. Intrachain disulfides connect Cys-18/Cys-274 and Cys-101/Cys-180. The helical transmembrane segment at 26–55 (YIFVMIPTLYSIIFVVGIFGNSLAVIVIYF) threads the bilayer. Residues 56 to 61 (YMKLKT) lie on the Cytoplasmic side of the membrane. Residues 62 to 89 (VASVFLLNLALADLCFLLTLPLWAVYTA) form a helical membrane-spanning segment. Residues 90-98 (MEYRWPFGN) lie on the Extracellular side of the membrane. The chain crosses the membrane as a helical span at residues 99–125 (YLCKIASASVSFNLYASVFLLTCLSID). Residues 126 to 141 (RYLAIVHPMKSRLRRT) are Cytoplasmic-facing. The chain crosses the membrane as a helical span at residues 142–165 (MLVAKVTCIIIWLLAGLASLPAII). Residues 166-190 (HRNVFFIENTNITVCAFHYESQNST) are Extracellular-facing. An angiotensin II-binding site is contributed by Arg-167. Asn-176 carries N-linked (GlcNAc...) asparagine glycosylation. Angiotensin II contacts are provided by Phe-182, His-183, and Tyr-184. Asn-188 carries N-linked (GlcNAc...) asparagine glycosylation. Residues 191–216 (LPIGLGLTKNILGFLFPFLIILTSYT) form a helical membrane-spanning segment. Lys-199 provides a ligand contact to angiotensin II. The Cytoplasmic segment spans residues 217–239 (LIWKALKKAYEIQKNKPRNDDIF). The helical transmembrane segment at 240-268 (KIIMAIVLFFFFSWVPHQIFTFLDVLIQL) threads the bilayer. Topologically, residues 269–278 (GVIHDCRIAD) are extracellular. A helical membrane pass occupies residues 279 to 304 (IVDTAMPITICIAYFNNCLNPLFYGF). Over 305–359 (LGKKFKKYFLQLLKYIPPKAKSHSNLSTKMSTLSYRPSDNVSSSSKKPVPCFEVE) the chain is Cytoplasmic. Positions 335–350 (STLSYRPSDNVSSSSK) are enriched in polar residues. Residues 335–359 (STLSYRPSDNVSSSSKKPVPCFEVE) are disordered. Cys-355 carries the S-palmitoyl cysteine lipid modification.

Belongs to the G-protein coupled receptor 1 family. As to quaternary structure, interacts with MAS1. Interacts with ARRB1. Interacts with FLNA (via filamin repeat 21); increases PKA-mediated phosphorylation of FLNA. In terms of processing, C-terminal Ser or Thr residues may be phosphorylated.

Its subcellular location is the cell membrane. Receptor for angiotensin II, a vasoconstricting peptide, which acts as a key regulator of blood pressure and sodium retention by the kidney. The activated receptor in turn couples to G-alpha proteins G(q) (GNAQ, GNA11, GNA14 or GNA15) and thus activates phospholipase C and increases the cytosolic Ca(2+) concentrations, which in turn triggers cellular responses such as stimulation of protein kinase C. The chain is Type-1 angiotensin II receptor (AGTR1) from Oryctolagus cuniculus (Rabbit).